The following is a 1072-amino-acid chain: DNA-directed RNA polymerase subunit beta (1072 aa).

It belongs to the RNA polymerase beta chain family. In terms of assembly, in plastids the minimal PEP RNA polymerase catalytic core is composed of four subunits: alpha, beta, beta', and beta''. When a (nuclear-encoded) sigma factor is associated with the core the holoenzyme is formed, which can initiate transcription.

The protein resides in the plastid. The protein localises to the chloroplast. It catalyses the reaction RNA(n) + a ribonucleoside 5'-triphosphate = RNA(n+1) + diphosphate. Functionally, DNA-dependent RNA polymerase catalyzes the transcription of DNA into RNA using the four ribonucleoside triphosphates as substrates. This Crucihimalaya wallichii (Rock-cress) protein is DNA-directed RNA polymerase subunit beta.